The following is a 495-amino-acid chain: Cytochrome P450 monooxygenase aneF (495 aa).

A helical membrane pass occupies residues 1 to 21 (MIAGLVLVVLLTKYLQRVFLH). N47 is a glycosylation site (N-linked (GlcNAc...) asparagine). Residue C437 coordinates heme.

The protein belongs to the cytochrome P450 family. The cofactor is heme.

It is found in the membrane. The enzyme catalyses dauca-4,7-diene + 3 reduced [NADPH--hemoprotein reductase] + 3 O2 = asperaculane D + 3 oxidized [NADPH--hemoprotein reductase] + 4 H2O + 4 H(+). Its pathway is secondary metabolite biosynthesis. In terms of biological role, cytochrome P450 monooxygenase; part of the gene cluster that mediates the biosynthesis of aculenes, a unique type of norsesquiterpenes that contain a nordaucane skeleton linked to an L-proline moiety and are of mixed biosynthetic origin. The pathway begins with the synthesis of dauca-4,7-diene by the terpene cyclase aneC using farnesyl pyrophosphate (FPP) as substrate. The cytochrome P450 monooxygenase aneF then performs the initial oxidation at C-12 of dauca-4,7-diene to yield asperaculane D. Asperaculane D is substrate of the cytochrome P450 monooxygenase aneD for C-10 hydroxylation to yield asperaculane E. The cytochrome P450 monooxygenase aneG then converts asperaculane E into aculene D via C-2 oxidation. The monomodular nonribosomal peptide synthtase aneB adenylates L-proline and the thiohydrolase aneE transfers this activated L-proline derivative to aculenes D and C to produce respectively aculenes B and A. The dioxygenase aneA converts aculene D into aculene C, and aculene B into aculene A by introducing the 5,6-alkene moiety. Asperculanes A, B, C and F, as well as 14-prolyl asperculane C, might be shunt products of the pathway. The polypeptide is Cytochrome P450 monooxygenase aneF (Aspergillus aculeatus (strain ATCC 16872 / CBS 172.66 / WB 5094)).